A 358-amino-acid chain; its full sequence is UDP-N-acetylglucosamine--N-acetylmuramyl-(pentapeptide) pyrophosphoryl-undecaprenol N-acetylglucosamine transferase (358 aa).

The UDP-N-acetyl-alpha-D-glucosamine site is built by serine 197 and glutamine 288.

This sequence belongs to the glycosyltransferase 28 family. MurG subfamily.

It localises to the cell membrane. It catalyses the reaction Mur2Ac(oyl-L-Ala-gamma-D-Glu-L-Lys-D-Ala-D-Ala)-di-trans,octa-cis-undecaprenyl diphosphate + UDP-N-acetyl-alpha-D-glucosamine = beta-D-GlcNAc-(1-&gt;4)-Mur2Ac(oyl-L-Ala-gamma-D-Glu-L-Lys-D-Ala-D-Ala)-di-trans,octa-cis-undecaprenyl diphosphate + UDP + H(+). The protein operates within cell wall biogenesis; peptidoglycan biosynthesis. Its function is as follows. Cell wall formation. Catalyzes the transfer of a GlcNAc subunit on undecaprenyl-pyrophosphoryl-MurNAc-pentapeptide (lipid intermediate I) to form undecaprenyl-pyrophosphoryl-MurNAc-(pentapeptide)GlcNAc (lipid intermediate II). This chain is UDP-N-acetylglucosamine--N-acetylmuramyl-(pentapeptide) pyrophosphoryl-undecaprenol N-acetylglucosamine transferase, found in Streptococcus agalactiae serotype Ia (strain ATCC 27591 / A909 / CDC SS700).